The primary structure comprises 121 residues: MVHHITSNDELQKLLSSTTYVVVDFFADWCPPCKAIAPVYEQLSTKHSVPDVLAFAKVNVDHVQDAAQQYGITAMPTFMFFKEGKQVAVNGQAVIKGADPRTLGAAAEKLGGLAQKRVAGA.

The Thioredoxin domain occupies 2–112 (VHHITSNDEL…LGAAAEKLGG (111 aa)). Cys-30 and Cys-33 are disulfide-bonded.

Belongs to the thioredoxin family.

In terms of biological role, participates in various redox reactions through the reversible oxidation of its active center dithiol to a disulfide and catalyzes dithiol-disulfide exchange reactions. This Fusarium culmorum protein is Thioredoxin-like protein.